We begin with the raw amino-acid sequence, 1184 residues long: DNA-directed RNA polymerase subunit beta' (1184 aa).

Cysteine 60, cysteine 62, cysteine 75, and cysteine 78 together coordinate Zn(2+). 3 residues coordinate Mg(2+): aspartate 449, aspartate 451, and aspartate 453. Zn(2+) is bound by residues cysteine 794, cysteine 867, cysteine 874, and cysteine 877.

Belongs to the RNA polymerase beta' chain family. In terms of assembly, the RNAP catalytic core consists of 2 alpha, 1 beta, 1 beta' and 1 omega subunit. When a sigma factor is associated with the core the holoenzyme is formed, which can initiate transcription. It depends on Mg(2+) as a cofactor. Zn(2+) is required as a cofactor.

The enzyme catalyses RNA(n) + a ribonucleoside 5'-triphosphate = RNA(n+1) + diphosphate. In terms of biological role, DNA-dependent RNA polymerase catalyzes the transcription of DNA into RNA using the four ribonucleoside triphosphates as substrates. This is DNA-directed RNA polymerase subunit beta' from Thermoanaerobacter sp. (strain X514).